We begin with the raw amino-acid sequence, 185 residues long: Small ribosomal subunit protein uS7 (185 aa).

It belongs to the universal ribosomal protein uS7 family. Part of the 30S ribosomal subunit.

One of the primary rRNA binding proteins, it binds directly to 16S rRNA where it nucleates assembly of the head domain of the 30S subunit. Is located at the subunit interface close to the decoding center. The protein is Small ribosomal subunit protein uS7 of Methanosarcina barkeri (strain Fusaro / DSM 804).